Here is a 123-residue protein sequence, read N- to C-terminus: Large ribosomal subunit protein bL20 (123 aa).

This sequence belongs to the bacterial ribosomal protein bL20 family.

Functionally, binds directly to 23S ribosomal RNA and is necessary for the in vitro assembly process of the 50S ribosomal subunit. It is not involved in the protein synthesizing functions of that subunit. The chain is Large ribosomal subunit protein bL20 (rplT) from Chlamydia trachomatis serovar D (strain ATCC VR-885 / DSM 19411 / UW-3/Cx).